We begin with the raw amino-acid sequence, 808 residues long: Zinc finger protein 148 (808 aa).

Disordered regions lie at residues 15–86 (SPVG…ISQD) and 131–162 (DSLI…SPAK). Over residues 56 to 73 (AEDDDDEDEEEDDDDDLA) the composition is skewed to acidic residues. Positions 150–159 (HKKKKRKQRS) are enriched in basic residues. 4 C2H2-type zinc fingers span residues 180–202 (HICE…VFIH), 208–230 (FQCN…EKIH), 236–258 (FRCD…KRTH), and 264–287 (YQCD…RMCH). 3 disordered regions span residues 305–338 (RTPE…ASIT), 596–617 (SINS…QAPP), and 705–736 (SFSG…DPQS). 2 stretches are compositionally biased toward polar residues: residues 705-718 (SFSG…SVSP) and 725-736 (QVTSPKKTDPQS).

This sequence belongs to the krueppel C2H2-type zinc-finger protein family.

It localises to the nucleus. Its function is as follows. Involved in transcriptional regulation. Represses the transcription of a number of genes. Required for primitive and definitive hematopoiesis during embryonic development. This is Zinc finger protein 148 (znf148) from Danio rerio (Zebrafish).